We begin with the raw amino-acid sequence, 38 residues long: MSVKTYPIFTFRWLAVHALAVPTVFFLGSITAMQFIQR.

A helical transmembrane segment spans residues 13 to 29 (WLAVHALAVPTVFFLGS). His-17 provides a ligand contact to heme.

It belongs to the PsbE/PsbF family. As to quaternary structure, heterodimer of an alpha subunit and a beta subunit. PSII is composed of 1 copy each of membrane proteins PsbA, PsbB, PsbC, PsbD, PsbE, PsbF, PsbH, PsbI, PsbJ, PsbK, PsbL, PsbM, PsbT, PsbX, PsbY, PsbZ, Psb30/Ycf12, at least 3 peripheral proteins of the oxygen-evolving complex and a large number of cofactors. It forms dimeric complexes. The cofactor is heme b.

The protein resides in the plastid. It is found in the chloroplast thylakoid membrane. This b-type cytochrome is tightly associated with the reaction center of photosystem II (PSII). PSII is a light-driven water:plastoquinone oxidoreductase that uses light energy to abstract electrons from H(2)O, generating O(2) and a proton gradient subsequently used for ATP formation. It consists of a core antenna complex that captures photons, and an electron transfer chain that converts photonic excitation into a charge separation. This Ostreococcus tauri protein is Cytochrome b559 subunit beta.